The following is a 3678-amino-acid chain: Dystrophin (3678 aa).

The actin-binding stretch occupies residues 1–240; that stretch reads MLWWEEVEDC…YITSLFQVLP (240 aa). 2 consecutive Calponin-homology (CH) domains span residues 15-119 and 134-240; these read DVQK…LHWQ and TNSE…QVLP. Positions 63–72 are ANK2- and ANK-3 binding; that stretch reads PKEKGSTRVH. The disordered stretch occupies residues 313–333; that stretch reads DSTQSPYPSQHLEAPRDKSLD. 24 Spectrin repeats span residues 341–449, 450–558, 561–669, 721–830, 832–936, 945–1047, 1050–1156, 1159–1265, 1268–1369, 1370–1465, 1470–1570, 1573–1678, 1681–1780, 1781–1876, 1879–1981, 1994–2103, 2106–2210, 2213–2318, 2319–2416, 2468–2570, 2573–2679, 2682–2795, 2801–2923, and 2928–3033; these read VNLD…KLHK, VLMD…VLQD, LKWQ…QISQ, ELRK…WLEY, TNII…ELQT, RYQE…KLEE, NKLR…ALKA, DKTV…TLEE, ACWH…LLEQ, SIQS…LFQK, EQRL…QLEK, KLSR…LLLE, KHME…KASI, PLKE…KALE, HQWY…TLHE, DVSY…RFDR, EKWR…RIEE, NVLS…ELEV, HLKD…LRTK, FNRA…QLNE, KDST…ALEE, RLLQ…HLEA, KRLH…RKID, and RLQE…QLHE. Positions 1417–1915 are interaction with SYNM; sequence SDLTSHEISL…PEPRDERKLK (499 aa). In terms of domain architecture, WW spans 3048–3081; sequence TSVQGPWERAISPNKVPYYINHETQTTCWDHPKM. Residues 3051-3401 are interaction with SYNM; that stretch reads QGPWERAISP…TVLEGDNMET (351 aa). Residues 3301–3357 form a ZZ-type; degenerate zinc finger; the sequence is KHQAKCNICKECPIIGFRYRSLKHFNYDICQSCFFSGRVAKGHKMHYPMVEYCTPTT. Residues cysteine 3306, cysteine 3309, cysteine 3330, and cysteine 3333 each coordinate Zn(2+). A binds to SNTB1 region spans residues 3459 to 3511; sequence DDEHLLIQHYCQSLNQDSPLSQPRSPAQILISLESEERGELERILADLEEENR. A phosphoserine mark is found at serine 3476, serine 3483, and serine 3493. Disordered stretches follow at residues 3521–3547 and 3596–3678; these read KQQHEHKGLSPLPSPPEMMPTSPQSPR and EAKV…EDTM. Polar residues-rich tracts occupy residues 3600–3619 and 3655–3665; these read NGTTVSSPSTSLQRSDSSQP and QLNNSFPSSRG. Phosphoserine is present on residues serine 3605, serine 3606, serine 3610, serine 3616, serine 3617, and serine 3659.

As to quaternary structure, interacts with SYNM. Interacts with the syntrophins SNTG1 and SNTG2. Interacts with KRT19. Component of the dystrophin-associated glycoprotein complex which is composed of three subcomplexes: a cytoplasmic complex comprised of DMD (or UTRN), DTNA and a number of syntrophins, such as SNTB1, SNTB2, SNTG1 and SNTG2, the transmembrane dystroglycan complex, and the sarcoglycan-sarcospan complex. Interacts with DAG1 (betaDAG1) with DMD; the interaction is inhibited by phosphorylation on the PPXY motif of DAG1. Interacts with SYNM; SNTA1 and SNTB1. Interacts with CMYA5. Directly interacts with ANK2 and ANK3; these interactions do not interfere with betaDAG1-binding and are necessary for proper localization in muscle cells. Identified in a dystroglycan complex that contains at least PRX, DRP2, UTRN, DMD and DAG1. Interacts with DTNB. Interacts with PGM5; the interaction is direct. Interacts with NOS1; localizes NOS1 to sarcolemma in muscle cells. Detected in quadriceps muscle and in sciatic nerve (at protein level). Expressed in the sarcolemma of the soleus muscle (at protein level). Differentially expressed during skeletal muscle, heart, and brain development. Also expressed in retina.

It localises to the cell membrane. The protein localises to the sarcolemma. The protein resides in the cytoplasm. Its subcellular location is the cytoskeleton. It is found in the postsynaptic cell membrane. Its function is as follows. Anchors the extracellular matrix to the cytoskeleton via F-actin. Ligand for dystroglycan. Component of the dystrophin-associated glycoprotein complex which accumulates at the neuromuscular junction (NMJ) and at a variety of synapses in the peripheral and central nervous systems and has a structural function in stabilizing the sarcolemma. Also implicated in signaling events and synaptic transmission. The chain is Dystrophin (Dmd) from Mus musculus (Mouse).